Consider the following 135-residue polypeptide: MKSKKQARAACPCGGGELAACCGRYLGPDASPAPTAQALMRSRYSAYALGLEDYLLATWHPSTRPEALHLDEDAGVVKWIGLEVKRCEAGSERDAEGVVEFVARCKVGGKAERMHETSRFLREDGRWYYVSGLVA.

This sequence belongs to the UPF0225 family.

The sequence is that of UPF0225 protein CV_3559 from Chromobacterium violaceum (strain ATCC 12472 / DSM 30191 / JCM 1249 / CCUG 213 / NBRC 12614 / NCIMB 9131 / NCTC 9757 / MK).